The sequence spans 265 residues: 2-amino-3,7-dideoxy-D-threo-hept-6-ulosonate synthase (265 aa).

The active-site Proton acceptor is Asp25. 1-deoxy-D-threo-hexo-2,5-diulose 6-phosphate is bound by residues 25–29 and 144–146; these read DHGIT and YAR. Tyr144 acts as the Proton donor in catalysis. Lys174 functions as the Schiff-base intermediate with substrate in the catalytic mechanism. 1-deoxy-D-threo-hexo-2,5-diulose 6-phosphate-binding positions include 199 to 200 and 226 to 227; these read GG and GR.

This sequence belongs to the DeoC/FbaB aldolase family. ADHS subfamily. As to quaternary structure, homodecamer.

It carries out the reaction 1-deoxy-D-threo-hexo-2,5-diulose 6-phosphate + L-aspartate 4-semialdehyde = 2,3-dioxopropyl phosphate + 2-amino-2,3,7-trideoxy-D-lyxo-hept-6-ulosonate. Functionally, catalyzes a transaldol reaction between 6-deoxy-5-ketofructose 1-phosphate (DKFP) and L-aspartate semialdehyde (ASA) with an elimination of hydroxypyruvaldehyde phosphate to yield 2-amino-3,7-dideoxy-D-threo-hept-6-ulosonate (ADH). Plays a key role in an alternative pathway of the biosynthesis of 3-dehydroquinate (DHQ), which is involved in the canonical pathway for the biosynthesis of aromatic amino acids. The polypeptide is 2-amino-3,7-dideoxy-D-threo-hept-6-ulosonate synthase (Halobacterium salinarum (strain ATCC 700922 / JCM 11081 / NRC-1) (Halobacterium halobium)).